The chain runs to 135 residues: Probable transporter XF_0766 (135 aa).

The next 4 helical transmembrane spans lie at 4–24, 45–65, 71–91, and 114–134; these read YWYP…LLLL, AQDI…SVIF, VTVA…GLGT, and IVAT…MGVY.

This sequence belongs to the TsuA/YedE (TC 9.B.102) family.

It localises to the cell inner membrane. In Xylella fastidiosa (strain 9a5c), this protein is Probable transporter XF_0766.